Here is a 751-residue protein sequence, read N- to C-terminus: Photosystem I P700 chlorophyll a apoprotein A1 (751 aa).

Transmembrane regions (helical) follow at residues 71–94 (VFSAHFGQLAIIFTWLSGMYFHGA), 157–180 (LYCTAIGALIFAALMLFAGWFHYH), 196–220 (LNHHLAGLLGLGSLSWAGHQIHVSL), 292–310 (TAHHHLAIAVLFLIAGHMY), 347–370 (WHAQLALNLAMLGSLTIIVAHHMY), 386–412 (LSLFTHHMWIGGFIIVGAAAHAAIFLV), 434–456 (AIISHLNWVCIFLGFHSFGLYIH), and 532–550 (FLVHHIHAFTIHVTVLILL). [4Fe-4S] cluster-binding residues include cysteine 574 and cysteine 583. The next 2 helical transmembrane spans lie at 590-611 (HVFLGLFWMYNAISVVIFHFSW) and 665-687 (LSAYGLFFLGAHFVWAFSLMFLF). Histidine 676 provides a ligand contact to chlorophyll a'. Chlorophyll a contacts are provided by methionine 684 and tyrosine 692. Position 693 (tryptophan 693) interacts with phylloquinone. The helical transmembrane segment at 725-745 (AVGVAHYLLGGIVTTWAFFLA) threads the bilayer.

The protein belongs to the PsaA/PsaB family. As to quaternary structure, the PsaA/B heterodimer binds the P700 chlorophyll special pair and subsequent electron acceptors. PSI consists of a core antenna complex that captures photons, and an electron transfer chain that converts photonic excitation into a charge separation. The eukaryotic PSI reaction center is composed of at least 11 subunits. Requires P700 is a chlorophyll a/chlorophyll a' dimer, A0 is one or more chlorophyll a, A1 is one or both phylloquinones and FX is a shared 4Fe-4S iron-sulfur center. as cofactor.

It localises to the plastid. Its subcellular location is the chloroplast thylakoid membrane. It catalyses the reaction reduced [plastocyanin] + hnu + oxidized [2Fe-2S]-[ferredoxin] = oxidized [plastocyanin] + reduced [2Fe-2S]-[ferredoxin]. Its function is as follows. PsaA and PsaB bind P700, the primary electron donor of photosystem I (PSI), as well as the electron acceptors A0, A1 and FX. PSI is a plastocyanin-ferredoxin oxidoreductase, converting photonic excitation into a charge separation, which transfers an electron from the donor P700 chlorophyll pair to the spectroscopically characterized acceptors A0, A1, FX, FA and FB in turn. Oxidized P700 is reduced on the lumenal side of the thylakoid membrane by plastocyanin. In Welwitschia mirabilis (Tree tumbo), this protein is Photosystem I P700 chlorophyll a apoprotein A1.